We begin with the raw amino-acid sequence, 435 residues long: Histone acetyltransferase ESA1 (435 aa).

One can recognise a Tudor-knot domain in the interval 22–73 (IIGCKCWVEKDGEQRLAEILSINNRRQPPKFYVHYEDFNKRLDEWILASRIN). Positions 78-89 (VTFPKPRDPDEK) are enriched in basic and acidic residues. The tract at residues 78-108 (VTFPKPRDPDEKKKKKQKKSATPQATDGETL) is disordered. The region spanning 152–423 (SRVRNLSKII…IDPEKLIWKP (272 aa)) is the MYST-type HAT domain. The segment at 185-210 (VYIDDFSLQYFGSKKQYARYRQKCTL) adopts a C2HC MYST-type; degenerate zinc-finger fold. An ESA1-RPD3 motif motif is present at residues 235–256 (RTWCRNLCLLSKLFLDHKTLYY). Lys-252 carries the post-translational modification N6-acetyllysine; by autocatalysis. Acetyl-CoA is bound by residues 293–297 (ACILT) and 302–308 (QRMGYGR). Glu-328 acts as the Proton donor/acceptor in catalysis. Acetyl-CoA is bound at residue Ser-332.

Belongs to the MYST (SAS/MOZ) family. In terms of assembly, component of the NuA4 histone acetyltransferase complex. Interacts with arp4. Autoacetylation at Lys-252 is required for proper function.

Its subcellular location is the nucleus. It is found in the chromosome. The enzyme catalyses L-lysyl-[histone] + acetyl-CoA = N(6)-acetyl-L-lysyl-[histone] + CoA + H(+). It carries out the reaction L-lysyl-[protein] + acetyl-CoA = N(6)-acetyl-L-lysyl-[protein] + CoA + H(+). The catalysed reaction is 2-hydroxyisobutanoyl-CoA + L-lysyl-[protein] = N(6)-(2-hydroxyisobutanoyl)-L-lysyl-[protein] + CoA + H(+). It catalyses the reaction (2E)-butenoyl-CoA + L-lysyl-[protein] = N(6)-(2E)-butenoyl-L-lysyl-[protein] + CoA + H(+). In terms of biological role, catalytic component of the NuA4 histone acetyltransferase (HAT) complex which is involved in epigenetic transcriptional activation of selected genes principally by acetylation of nucleosomal histones H4, H3, H2B, H2A and H2A variant H2A.Z. Acetylates histone H4 to form H4K5ac, H4K8ac, H4K12ac and H4K16ac, histone H3 to form H3K14ac, and histone H2A to form H2AK4ac and H2AK7ac. The NuA4 complex is involved in the DNA damage response and is required for chromosome segregation. The NuA4 complex plays a direct role in repair of DNA double-strand breaks (DSBs) through homologous recombination. Recruitment to promoters depends on H3K4me. Also acetylates non-histone proteins. In addition to protein acetyltransferase, can use different acyl-CoA substrates, such as 2-hydroxyisobutanoyl-CoA (2-hydroxyisobutyryl-CoA) or (2E)-butenoyl-CoA (crotonyl-CoA), and is able to mediate protein 2-hydroxyisobutyrylation and crotonylation, respectively. In Eremothecium gossypii (strain ATCC 10895 / CBS 109.51 / FGSC 9923 / NRRL Y-1056) (Yeast), this protein is Histone acetyltransferase ESA1 (ESA1).